Consider the following 955-residue polypeptide: 2-oxoglutarate dehydrogenase E1 component (955 aa).

It belongs to the alpha-ketoglutarate dehydrogenase family. As to quaternary structure, homodimer. Part of the 2-oxoglutarate dehydrogenase (OGDH) complex composed of E1 (2-oxoglutarate dehydrogenase), E2 (dihydrolipoamide succinyltransferase) and E3 (dihydrolipoamide dehydrogenase); the complex contains multiple copies of the three enzymatic components (E1, E2 and E3). Thiamine diphosphate is required as a cofactor.

The enzyme catalyses N(6)-[(R)-lipoyl]-L-lysyl-[protein] + 2-oxoglutarate + H(+) = N(6)-[(R)-S(8)-succinyldihydrolipoyl]-L-lysyl-[protein] + CO2. Functionally, E1 component of the 2-oxoglutarate dehydrogenase (OGDH) complex which catalyzes the decarboxylation of 2-oxoglutarate, the first step in the conversion of 2-oxoglutarate to succinyl-CoA and CO(2). This Bacillus cereus (strain AH820) protein is 2-oxoglutarate dehydrogenase E1 component.